A 312-amino-acid polypeptide reads, in one-letter code: Copper chaperone for superoxide dismutase, chloroplastic (312 aa).

The transit peptide at 1–78 (MVGFLRALTA…AAAAATADLS (78 aa)) directs the protein to the chloroplast. Residues 89–152 (ELMTEFMVDM…TLHQTGRDAR (64 aa)) enclose the HMA domain. Cu cation is bound by residues C100, C103, C301, and C303.

The protein in the C-terminal section; belongs to the Cu-Zn superoxide dismutase family. Cu(2+) serves as cofactor.

It localises to the plastid. The protein resides in the chloroplast. Functionally, copper chaperone for superoxide dismutases (SODs). Binds copper ions and delivers them specifically to SODs. Is required for assistance in SODs disulfide bond formation and thereby activation of SODs. This Oryza sativa subsp. japonica (Rice) protein is Copper chaperone for superoxide dismutase, chloroplastic (CCS).